We begin with the raw amino-acid sequence, 555 residues long: Inorganic phosphate transporter 1-11 (555 aa).

Over 1–28 the chain is Cytoplasmic; that stretch reads MADADGGSNLAVLDALDSARTQMYHMKA. Residues 29–49 traverse the membrane as a helical segment; it reads IVIAGMGFFTDAYDLFCISTV. Over 50 to 77 the chain is Extracellular; the sequence is SKLLGRLYYQPDGSTDSKPGALSKTANN. The helical transmembrane segment at 78-98 threads the bilayer; it reads MVIGVALVGTLMGQLVFGYFG. Over 99 to 105 the chain is Cytoplasmic; the sequence is DKLGRKR. The chain crosses the membrane as a helical span at residues 106–126; that stretch reads VYGVTLILMAACAIGSGLSFG. Topologically, residues 127 to 130 are extracellular; it reads SSRK. Residues 131–151 traverse the membrane as a helical segment; sequence AVIGTLCFFRFWLGFGIGGDY. Topologically, residues 152 to 167 are cytoplasmic; the sequence is PLSATIMSEYSNKKTR. The helical transmembrane segment at 168 to 188 threads the bilayer; the sequence is GAFIAAVFAMQGVGIIFAGLV. Over 189–216 the chain is Extracellular; sequence SMIVSSIFLTYNKAPSYKGNHDLSRQMP. The helical transmembrane segment at 217 to 237 threads the bilayer; that stretch reads AADYVWRIVLMIGAFPALATF. The Cytoplasmic portion of the chain corresponds to 238-298; it reads YWRMKMPETA…PLLSMEFARR (61 aa). Residues 299–319 traverse the membrane as a helical segment; it reads HGLHLIGTTTTWFLLDIAFYS. The Extracellular portion of the chain corresponds to 320-351; sequence QNLTQKDIFPAMGLISGAAEVNALTEMFQISK. A helical membrane pass occupies residues 352–372; sequence ASFLVALLGTFPGYWVTVALI. The Cytoplasmic segment spans residues 373–377; it reads DKMGR. The helical transmembrane segment at 378–398 threads the bilayer; it reads YMIQLIGFFMMSMFMLAMGIL. At 399-408 the chain is on the extracellular side; the sequence is YDYLKTHHFL. A helical transmembrane segment spans residues 409–436; sequence FGLLYALTFFFANFGPNSTTFVLPAELF. The Cytoplasmic portion of the chain corresponds to 437 to 442; the sequence is PTRVRS. Residues 443–463 form a helical membrane-spanning segment; it reads TCHAISAAAGKAGAIVAAFGI. At 464–477 the chain is on the extracellular side; it reads QKLTYNSQVKSIKK. Residues 478-498 traverse the membrane as a helical segment; the sequence is ALIILSITNMLGFFFTFLVPE. The Cytoplasmic segment spans residues 499–555; that stretch reads TMGRSLEEISGEDGNTGAGGGGAPAAANAGVGVSASDVSRDEKFPASSTEWQTSMHA. The disordered stretch occupies residues 506–555; that stretch reads EISGEDGNTGAGGGGAPAAANAGVGVSASDVSRDEKFPASSTEWQTSMHA. Residues 512 to 521 are compositionally biased toward gly residues; that stretch reads GNTGAGGGGA. The span at 522–535 shows a compositional bias: low complexity; sequence PAAANAGVGVSASD. The segment covering 544-555 has biased composition (polar residues); that stretch reads ASSTEWQTSMHA.

The protein belongs to the major facilitator superfamily. Phosphate:H(+) symporter (TC 2.A.1.9) family.

The protein resides in the membrane. Symbiosis-specific regulated inorganic phosphate (Pi) transporter. Probably involved in symbiosis-mediated Pi uptake in roots colonized by myccorhizal fungi. The protein is Inorganic phosphate transporter 1-11 (PHT1-11) of Oryza sativa subsp. japonica (Rice).